We begin with the raw amino-acid sequence, 72 residues long: Seed trypsin/chymotrypsin inhibitor IVB (72 aa).

Cystine bridges form between Cys8-Cys61, Cys9-Cys24, Cys12-Cys57, Cys14-Cys22, Cys31-Cys38, Cys35-Cys50, and Cys40-Cys48.

It belongs to the Bowman-Birk serine protease inhibitor family. Seed.

In terms of biological role, inhibitor of trypsin and of chymotrypsin. May function as a natural phytochemical defense against predators. In Pisum sativum (Garden pea), this protein is Seed trypsin/chymotrypsin inhibitor IVB.